A 491-amino-acid chain; its full sequence is MAIAVLGPTFLDLAENVESSVANISFIFVGRSMGYLGGSVLGGILFEQINQHLLLGISMLATAAGLFVVPWCKKAVLLTAVMSVVGMSMGFLDTGGNIIILNTWEDQAGPHIQALHFSFALGAFVAPILAKLALEFLPLDKKSFNVSEPFLEQSALPFGIKKSMLSYIVIGTYILLVSLFLFILFSKSRPRQSSGKASDDKFRTARYHNAVIFLLFLFFFCYVGAEVAYGSYIFTYAITYITNIENNYAAGLNSLFWGVFAAVRGLAICFATCLYPGTMLLLSVIGCTLSSLILVLFSRNHLLLWVGTAVYGASMATTFPSGFSWVQQYTTIGGKSASLFVVGAALGEMAIPASVGYLQGMFPNFPVLMYTALASSTMTAILFPVMYKLATAQQDQAQYNRVESDDRRALLSSSGMEEEDEDEAQNWNEADFETIEMNDQMKNSVTVISEDTPGNSAPSEILKHSTKSNGAEAAANKSPSRKHNTDREKND.

11 consecutive transmembrane segments (helical) span residues 26 to 46 (FIFVGRSMGYLGGSVLGGILF), 52 to 72 (HLLLGISMLATAAGLFVVPWC), 81 to 101 (VMSVVGMSMGFLDTGGNIIIL), 119 to 139 (FALGAFVAPILAKLALEFLPL), 165 to 185 (LSYIVIGTYILLVSLFLFILF), 210 to 230 (AVIFLLFLFFFCYVGAEVAYG), 255 to 275 (LFWGVFAAVRGLAICFATCLY), 277 to 297 (GTMLLLSVIGCTLSSLILVLF), 303 to 323 (LLWVGTAVYGASMATTFPSGF), 338 to 358 (SLFVVGAALGEMAIPASVGYL), and 365 to 385 (FPVLMYTALASSTMTAILFPV). Disordered regions lie at residues 397 to 425 (AQYNRVESDDRRALLSSSGMEEEDEDEAQ) and 438 to 491 (NDQM…EKND). The segment covering 416–425 (MEEEDEDEAQ) has biased composition (acidic residues). Residues 440–458 (QMKNSVTVISEDTPGNSAP) are compositionally biased toward polar residues.

Belongs to the major facilitator superfamily.

It localises to the apical cell membrane. In terms of biological role, may function as a sodium-dependent glucose transporter. Potential channels for urea in the inner medulla of kidney. This chain is Sodium-dependent glucose transporter 1 (mfsd4b), found in Xenopus laevis (African clawed frog).